The following is a 293-amino-acid chain: Protease HtpX homolog (293 aa).

2 helical membrane-spanning segments follow: residues 6-26 (VAVM…LIGG) and 28-48 (SGMV…YWNS). His-130 contacts Zn(2+). The active site involves Glu-131. Residue His-134 coordinates Zn(2+). 2 consecutive transmembrane segments (helical) span residues 145–165 (LTAT…FFGG) and 172–192 (PLGA…AMMV). Residue Glu-201 coordinates Zn(2+).

The protein belongs to the peptidase M48B family. The cofactor is Zn(2+).

It is found in the cell inner membrane. The polypeptide is Protease HtpX homolog (Rhodospirillum rubrum (strain ATCC 11170 / ATH 1.1.1 / DSM 467 / LMG 4362 / NCIMB 8255 / S1)).